Reading from the N-terminus, the 365-residue chain is Phospho-N-acetylmuramoyl-pentapeptide-transferase (365 aa).

The next 10 helical transmembrane spans lie at 2 to 22 (ISLI…TPLL), 51 to 71 (TLGG…SALY), 80 to 100 (PSWS…LGFI), 118 to 138 (GKFI…LILP), 167 to 187 (VAIV…TNAI), 196 to 216 (LAAG…FWEF), 234 to 254 (PLDL…FLWY), 256 to 276 (SNPA…GLFA), 277 to 297 (AMSI…LFVI), and 340 to 360 (FWMI…GDWV).

Belongs to the glycosyltransferase 4 family. MraY subfamily. Requires Mg(2+) as cofactor.

The protein resides in the cell membrane. The catalysed reaction is UDP-N-acetyl-alpha-D-muramoyl-L-alanyl-gamma-D-glutamyl-meso-2,6-diaminopimeloyl-D-alanyl-D-alanine + di-trans,octa-cis-undecaprenyl phosphate = di-trans,octa-cis-undecaprenyl diphospho-N-acetyl-alpha-D-muramoyl-L-alanyl-D-glutamyl-meso-2,6-diaminopimeloyl-D-alanyl-D-alanine + UMP. The protein operates within cell wall biogenesis; peptidoglycan biosynthesis. Functionally, catalyzes the initial step of the lipid cycle reactions in the biosynthesis of the cell wall peptidoglycan: transfers peptidoglycan precursor phospho-MurNAc-pentapeptide from UDP-MurNAc-pentapeptide onto the lipid carrier undecaprenyl phosphate, yielding undecaprenyl-pyrophosphoryl-MurNAc-pentapeptide, known as lipid I. In Bifidobacterium adolescentis (strain ATCC 15703 / DSM 20083 / NCTC 11814 / E194a), this protein is Phospho-N-acetylmuramoyl-pentapeptide-transferase.